A 1129-amino-acid chain; its full sequence is MAPPGMRLRSGRSTGAPLTRGSCRKRNRSPERCDLGDDLHLQPRRKHVADSVDGRECGPHTLPIPGSPTVFTSGLPAFVSSPTLPVAPIPSPAPATPLPPPALLPPVTTSSSPIPPSHPVSPGTTDTHSPSPALPPTQSPESSQRPPLSSPTGRPDSSTPMRPPPSQQTTPPHSPTTPPPEPPSKSSPDSLAPSTLRSLRKRRLSSPQGPSTLNPICQSPPVSPPRCDFANRSVYPPWATESPIYVGSSSDGDTPPRQPPTSPISIGSSSPSEGSWGDDTAMLVLLAEIAEEASKNEKECSENNQAGEDNGDNEISKESQVDKDDNDNKDDEEEQETDEEDEEDDEEDDEEDDEEDDEEDDEEDDEEDDEEEDEEEDEEEDEEEDEEEEEDEEDDDDEDNEDEEDDEEEDKKEDEEDGGDGNKTLSIQSSQQQQEPQQQEPQQQEPQQQEPQQQEPQQQEPQQQEPQQQEPQQREPQQREPQQREPQQREPQQREPQQREPQQREPQQREPQQREPQQREPQQREPQQREPQQQEPQQQEPQQQEPQQQEPQQQEPQQQEPQQQEPQQQEPQQQEPQQQEPQQQEPQQQEPQQQDEQQQDEQQQDEQQQDEQQQDEQQQDEQQQDEQQQDEQEQQDEQQQDEQQQQDEQEQQEEQEQQEEQQQDEQQQDEQQQDEQQQDEQEQQDEQQQDEQQQQDEQEQQEEQEQQEEQEQQEEQEQQEEQEQELEEQEQELEEQEQELEEQEQELEEQEQELEEQEQELEEQEQELEEQEQELEEQEQELEEQEQELEEQEQELEEQEQELEEQEQELEEQEQELEEQEQEQELEEVEEQEQEQEEQELEEVEEQEQEQEEQEEQELEEVEEQEEQELEEVEEQEEQELEEVEEQEQQGVEQQEQETVEEPIILHGSSSEDEMEVDYPVVSTHEQIASSPPGDNTPDDDPQPGPSREYRYVLRTSPPHRPGVRMRRVPVTHPKKPHPRYQQPPVPYRQIDDCPAKARPQHIFYRRFLGKDGRRDPKCQWKFAVIFWGNDPYGLKKLSQAFQFGGVKAGPVSCLPHPGPDQSPITYCVYVYCQNKDTSKKVQMARLAWEASHPLAGNLQSSIVKFKKPLPLTQPGENQGPGDSPQEMT.

Disordered stretches follow at residues 1-988 and 1110-1129; these read MAPP…PVPY and LPLT…QEMT. 2 stretches are compositionally biased toward basic and acidic residues: residues 28-41 and 48-58; these read RSPE…DLHL and VADSVDGRECG. Residues 85 to 104 are compositionally biased toward pro residues; sequence PVAPIPSPAPATPLPPPALL. Residues 139–156 are compositionally biased toward polar residues; that stretch reads SPESSQRPPLSSPTGRPD. The segment covering 161-185 has biased composition (pro residues); sequence MRPPPSQQTTPPHSPTTPPPEPPSK. Residues 186 to 197 are compositionally biased toward low complexity; it reads SSPDSLAPSTLR. Positions 207-217 are enriched in polar residues; sequence PQGPSTLNPIC. Over residues 263–275 the composition is skewed to low complexity; the sequence is PISIGSSSPSEGS. 2 stretches are compositionally biased toward basic and acidic residues: residues 292–301 and 314–323; these read EASKNEKECS and EISKESQVDK. A compositionally biased stretch (acidic residues) spans 324–419; the sequence is DDNDNKDDEE…DKKEDEEDGG (96 aa). Residues 431–471 show a composition bias toward low complexity; that stretch reads QQQQEPQQQEPQQQEPQQQEPQQQEPQQQEPQQQEPQQQEP. Basic and acidic residues predominate over residues 472-528; that stretch reads QQREPQQREPQQREPQQREPQQREPQQREPQQREPQQREPQQREPQQREPQQREPQQ. The span at 529-596 shows a compositional bias: low complexity; sequence REPQQQEPQQ…QQQEPQQQDE (68 aa). The segment covering 597–888 has biased composition (acidic residues); sequence QQQDEQQQDE…QELEEVEEQE (292 aa). A compositionally biased stretch (polar residues) spans 924–934; sequence THEQIASSPPG. Over residues 962-979 the composition is skewed to basic residues; the sequence is PGVRMRRVPVTHPKKPHP. Positions 1008–1129 are DNA-binding domain; the sequence is FLGKDGRRDP…GPGDSPQEMT (122 aa).

Homooligomer. Interacts with host BRD2. Interacts with host RELA, ELOB, ELOC and CUL5; these interactions induce the proteasomal degradation of host RELA. Interacts with host TRIM28 and NFE2L2/NRF2; these interactions are essential for the shutdown of lytic gene expression during the early stage of infection. Interacts (via N-terminus) with host histones H2A and H2B; these interactions are essential to dock LANA1 onto chromosomes. Interacts with host BUB1 and PCNA. Interacts with host NAP1L1; this interaction is required for LANA1-dependent DNA replication. Interacts with components of the host MLL1 complex KMT2A and WDR5.

It localises to the host nucleus. Its function is as follows. Multifunctional protein that plays a role in the replication and long-term persistence of the viral episomal genome in dividing cells. Binds to mitotic chromosomes via its N-terminal region and to a 16-bp imperfect palindrome within the origin of replication (oriP) located in the viral terminal repeat (TR) through its C-terminal. Tethers viral episomes to chromosomes during mitosis. Plays a critical role in the shutdown of lytic gene expression during the early stage of infection by interacting with host TRIM28. Also plays a role in the repression of host NF-kappa-B activity upon TNF-alpha stimulation by promoting the proteasomal degradation of host RELA. Promotes nuclear localization and cleavage of host STAT6 leading to constitutive activation of the IL13/STAT6 signaling pathway to promote viral latency. Interacts with and modulates the histone methyltransferase MLL1 complex activity, leading to its recruitment on viral DNA terminal repeats changing the dynamic of histone H3 methylated 'Lys-4'(H3K4me) profile during the initial hours following infection. This is Protein LANA1 (LANA1) from Homo sapiens (Human).